We begin with the raw amino-acid sequence, 223 residues long: Triosephosphate isomerase (223 aa).

A substrate-binding site is contributed by 6–8 (NLK). H86 serves as the catalytic Electrophile. E151 functions as the Proton acceptor in the catalytic mechanism. G157 and S187 together coordinate substrate.

It belongs to the triosephosphate isomerase family. As to quaternary structure, homodimer.

Its subcellular location is the cytoplasm. The enzyme catalyses D-glyceraldehyde 3-phosphate = dihydroxyacetone phosphate. It participates in carbohydrate biosynthesis; gluconeogenesis. The protein operates within carbohydrate degradation; glycolysis; D-glyceraldehyde 3-phosphate from glycerone phosphate: step 1/1. Involved in the gluconeogenesis. Catalyzes stereospecifically the conversion of dihydroxyacetone phosphate (DHAP) to D-glyceraldehyde-3-phosphate (G3P). This chain is Triosephosphate isomerase, found in Campylobacter jejuni subsp. doylei (strain ATCC BAA-1458 / RM4099 / 269.97).